The primary structure comprises 561 residues: Laccase-1 (561 aa).

The N-terminal stretch at Met-1 to Ala-20 is a signal peptide. Plastocyanin-like domains are found at residues Val-68–Thr-185 and Asp-191–Ser-337. N-linked (GlcNAc...) asparagine glycans are attached at residues Asn-71, Asn-87, and Asn-114. Cu cation contacts are provided by His-119, His-121, His-163, and His-165. An intrachain disulfide couples Cys-140 to Cys-542. Asn-226, Asn-284, Asn-327, Asn-391, and Asn-398 each carry an N-linked (GlcNAc...) asparagine glycan. The 130-residue stretch at Leu-396–Ser-525 folds into the Plastocyanin-like 3 domain. Positions 445, 448, 450, 504, 505, 506, and 510 each coordinate Cu cation.

The protein belongs to the multicopper oxidase family. Requires Cu cation as cofactor.

The protein resides in the secreted. It catalyses the reaction 4 hydroquinone + O2 = 4 benzosemiquinone + 2 H2O. Functionally, lignin degradation and detoxification of lignin-derived products. In Botryotinia fuckeliana (Noble rot fungus), this protein is Laccase-1 (lcc1).